The chain runs to 145 residues: U1 small nuclear ribonucleoprotein C (145 aa).

The Matrin-type zinc finger occupies Tyr4–Phe36. Residues Phe67 to Pro91 are disordered. Residues Gly73–Pro91 show a composition bias toward pro residues.

Belongs to the U1 small nuclear ribonucleoprotein C family. In terms of assembly, U1 snRNP is composed of the 7 core Sm proteins B/B', D1, D2, D3, E, F and G that assemble in a heptameric protein ring on the Sm site of the small nuclear RNA to form the core snRNP, and at least 3 U1 snRNP-specific proteins U1-70K, U1-A and U1-C. U1-C interacts with U1 snRNA and the 5' splice-site region of the pre-mRNA.

It is found in the nucleus. In terms of biological role, component of the spliceosomal U1 snRNP, which is essential for recognition of the pre-mRNA 5' splice-site and the subsequent assembly of the spliceosome. U1-C is directly involved in initial 5' splice-site recognition for both constitutive and regulated alternative splicing. The interaction with the 5' splice-site seems to precede base-pairing between the pre-mRNA and the U1 snRNA. Stimulates commitment or early (E) complex formation by stabilizing the base pairing of the 5' end of the U1 snRNA and the 5' splice-site region. Regulates alternative splicing of a distinct group of target genes. The chain is U1 small nuclear ribonucleoprotein C from Drosophila melanogaster (Fruit fly).